The chain runs to 125 residues: Cysteine proteinase inhibitor 3 (125 aa).

Residues 1–22 (MESKTFWIVTLLLCGTIQLAIC) form the signal peptide. The 89-residue stretch at 36-124 (GGVHDLRGNQ…KQLQEFKESS (89 aa)) folds into the Cystatin domain. The short motif at 80-84 (QVVAG) is the Secondary area of contact element.

It belongs to the cystatin family. Phytocystatin subfamily.

The protein localises to the secreted. Specific inhibitor of cysteine proteinases. Probably involved in the regulation of endogenous processes and in defense against pests and pathogens. The sequence is that of Cysteine proteinase inhibitor 3 (CYS3) from Arabidopsis thaliana (Mouse-ear cress).